Reading from the N-terminus, the 605-residue chain is Apoptosis-inducing factor 3 (605 aa).

The segment at 22–45 is disordered; sequence KERGKEELSASGKGSPRAYQGNGT. Residues 70-165 enclose the Rieske domain; the sequence is AAVCHVKDLE…VKIEKEKVYV (96 aa). [2Fe-2S] cluster-binding residues include Cys-109, His-111, Cys-128, and His-131. FAD is bound by residues 201–205, Arg-235, Lys-240, Val-270, Asp-467, and Trp-514; that span reads GAGAA.

It belongs to the FAD-dependent oxidoreductase family. As to expression, ubiquitous. Expressed in bone marrow, cerebral cortex, liver, ovary, thymus, thyroid gland and tongue (at protein level).

It is found in the mitochondrion. Induces apoptosis through a caspase dependent pathway. Reduces mitochondrial membrane potential. The chain is Apoptosis-inducing factor 3 (AIFM3) from Homo sapiens (Human).